Here is a 475-residue protein sequence, read N- to C-terminus: Cytochrome P450 monooxygenase opdE (475 aa).

The helical transmembrane segment at 10 to 32 (VQNIPVLLLSCGFLAILFRSLVL) threads the bilayer. Cys457 lines the heme pocket.

The protein belongs to the cytochrome P450 family. Heme serves as cofactor.

It is found in the membrane. Its pathway is secondary metabolite biosynthesis. Its function is as follows. Cytochrome P450 monooxygenase; part of the gene cluster that mediates the biosynthesis of oxopyrrolidines, polyketide-amino acid hybrid compounds with feature structures of tetramic acid. Does not seem to play a role in oxopyrrolidines A and B biosynthesis. May be involved in further modifications of these oxopyrrolidines. The chain is Cytochrome P450 monooxygenase opdE from Penicillium oxalicum (strain 114-2 / CGMCC 5302) (Penicillium decumbens).